Here is an 837-residue protein sequence, read N- to C-terminus: Ribosome biogenesis ATPase RIX7 (837 aa).

Disordered regions lie at residues 36-56 (RSLR…EEDE) and 149-207 (ITST…LKSL). Serine 42 is subject to Phosphoserine. The segment covering 43 to 56 (QGEEGENNEGEEDE) has biased composition (acidic residues). A compositionally biased stretch (polar residues) spans 149–163 (ITSTWSKSGSVSESI). Residues 176–192 (KSKKRSKEGTCKVKRQK) show a composition bias toward basic residues. 246-253 (GPPGCGKT) provides a ligand contact to ATP. The interval 443 to 468 (PTTATDSSEDNMEIDETANGDESSLK) is disordered. Over residues 449–461 (SSEDNMEIDETAN) the composition is skewed to acidic residues. 574-581 (GPPGCGKT) provides a ligand contact to ATP.

The protein belongs to the AAA ATPase family.

It localises to the nucleus. It is found in the nucleolus. Involved in ribosome biogenesis. Seems to be required for restructuring nucleoplasmic 60S pre-ribosomal particles to make them competent for nuclear export. This Saccharomyces cerevisiae (strain ATCC 204508 / S288c) (Baker's yeast) protein is Ribosome biogenesis ATPase RIX7 (RIX7).